The chain runs to 278 residues: HTH-type transcriptional activator RhaS (278 aa).

Positions 174–272 (NLLLAWLEDH…NWSPRDIRQG (99 aa)) constitute an HTH araC/xylS-type domain. 2 DNA-binding regions (H-T-H motif) span residues 191 to 212 (DAVADQFSLSLRTLHRQLKQQT) and 239 to 262 (VTDIAYHCGFSDSNHFSTLFRREF).

In terms of assembly, binds DNA as a dimer.

It is found in the cytoplasm. Its function is as follows. Activates expression of the rhaBAD and rhaT operons. The chain is HTH-type transcriptional activator RhaS from Escherichia coli O157:H7.